The primary structure comprises 294 residues: Enoyl-CoA hydratase domain-containing protein 3, mitochondrial (294 aa).

The transit peptide at Met1–Asn61 directs the protein to the mitochondrion.

Belongs to the enoyl-CoA hydratase/isomerase family.

It localises to the mitochondrion. Its function is as follows. May play a role in fatty acid biosynthesis and insulin sensitivity. This Xenopus laevis (African clawed frog) protein is Enoyl-CoA hydratase domain-containing protein 3, mitochondrial (echdc3).